A 269-amino-acid polypeptide reads, in one-letter code: Zinc transporter ZupT (269 aa).

A run of 8 helical transmembrane segments spans residues 12-32 (AFSI…LVMF), 41-61 (LSFG…TEIF), 75-95 (DHAF…IALI), 126-146 (MMAA…TFFA), 152-172 (AVGM…GISI), 187-207 (VWAC…GYLV), 211-231 (FLSP…MVFL), and 249-269 (TVYG…LFHF). 2 residues coordinate Fe(2+): N136 and E139. The Zn(2+) site is built by E139 and H164. The Fe(2+) site is built by N165, E168, and E197. E168 serves as a coordination point for Zn(2+).

Belongs to the ZIP transporter (TC 2.A.5) family. ZupT subfamily.

The protein localises to the cell inner membrane. The enzyme catalyses Zn(2+)(in) = Zn(2+)(out). Mediates zinc uptake. May also transport other divalent cations. The protein is Zinc transporter ZupT of Neisseria meningitidis serogroup B (strain ATCC BAA-335 / MC58).